The primary structure comprises 39 residues: Potassium channel toxin alpha-KTx 2.1 (39 aa).

3 cysteine pairs are disulfide-bonded: Cys7/Cys29, Cys13/Cys34, and Cys17/Cys36. The tract at residues 26-34 (GAKCMNGKC) is interaction with Ca(2+)-activated K(+) channels. Asn39 carries the post-translational modification Asparagine amide.

Belongs to the short scorpion toxin superfamily. Potassium channel inhibitor family. Alpha-KTx 02 subfamily. As to expression, expressed by the venom gland.

It localises to the secreted. Functionally, blocks voltage-gated potassium channels (mKv1.1/KCNA1 (Kd&gt;25 nM), rKv1.2/KCNA2 (Kd=2 nM), mKv1.3/KCNA3 (Kd=1 nM), hKv1.5/KCNA5 (Kd&gt;25 nM) and mKv3.1/KCNC1 (Kd&gt;25 nM)) and calcium-activated potassium channels (KCa1.1/KCNMA1 and KCa3.1/KCNN4, Kd&gt;25 nM). In Centruroides noxius (Mexican scorpion), this protein is Potassium channel toxin alpha-KTx 2.1.